Consider the following 286-residue polypeptide: Ribose-5-phosphate isomerase (286 aa).

This sequence belongs to the ribose 5-phosphate isomerase family.

The protein resides in the cytoplasm. The catalysed reaction is aldehydo-D-ribose 5-phosphate = D-ribulose 5-phosphate. Its pathway is carbohydrate degradation; pentose phosphate pathway; D-ribose 5-phosphate from D-ribulose 5-phosphate (non-oxidative stage): step 1/1. This is Ribose-5-phosphate isomerase (RKI1) from Mycosarcoma maydis (Corn smut fungus).